A 491-amino-acid polypeptide reads, in one-letter code: Hydroxymethylglutaryl-CoA synthase (491 aa).

Glu127 serves as the catalytic Proton donor/acceptor. Catalysis depends on Cys159, which acts as the Acyl-thioester intermediate. (3S)-3-hydroxy-3-methylglutaryl-CoA contacts are provided by Cys159, Thr201, and Ser250. At Ser276 the chain carries Phosphoserine. His296 (proton donor/acceptor) is an active-site residue. (3S)-3-hydroxy-3-methylglutaryl-CoA-binding residues include His296, Lys305, Asn371, and Ser405.

The protein belongs to the thiolase-like superfamily. HMG-CoA synthase family.

It carries out the reaction acetoacetyl-CoA + acetyl-CoA + H2O = (3S)-3-hydroxy-3-methylglutaryl-CoA + CoA + H(+). The protein operates within metabolic intermediate biosynthesis; (R)-mevalonate biosynthesis; (R)-mevalonate from acetyl-CoA: step 2/3. Functionally, hydroxymethylglutaryl-CoA synthase; part of the first module of ergosterol biosynthesis pathway that includes the early steps of the pathway, conserved across all eukaryotes, and which results in the formation of mevalonate from acetyl-coenzyme A (acetyl-CoA). ERG13 condenses acetyl-CoA with acetoacetyl-CoA to form hydroxymethylglutaryl-CoA (HMG-CoA). The first module starts with the action of the cytosolic acetyl-CoA acetyltransferase ERG10 that catalyzes the formation of acetoacetyl-CoA. The hydroxymethylglutaryl-CoA synthase ERG13 then condenses acetyl-CoA with acetoacetyl-CoA to form HMG-CoA. The rate-limiting step of the early module is the reduction to mevalonate by the 3-hydroxy-3-methylglutaryl-coenzyme A (HMG-CoA) reductases HMG1 and HMG2 which are derived from a single ancestral HMGR gene by gene duplication. The sequence is that of Hydroxymethylglutaryl-CoA synthase from Saccharomyces cerevisiae (strain ATCC 204508 / S288c) (Baker's yeast).